A 562-amino-acid polypeptide reads, in one-letter code: Oxygen-dependent choline dehydrogenase (562 aa).

An FAD-binding site is contributed by 4-33 (DYIIIGAGSAGNVLATRLTEDPNTTVLLLE). Catalysis depends on histidine 473, which acts as the Proton acceptor.

The protein belongs to the GMC oxidoreductase family. FAD is required as a cofactor.

The catalysed reaction is choline + A = betaine aldehyde + AH2. It carries out the reaction betaine aldehyde + NAD(+) + H2O = glycine betaine + NADH + 2 H(+). The protein operates within amine and polyamine biosynthesis; betaine biosynthesis via choline pathway; betaine aldehyde from choline (cytochrome c reductase route): step 1/1. In terms of biological role, involved in the biosynthesis of the osmoprotectant glycine betaine. Catalyzes the oxidation of choline to betaine aldehyde and betaine aldehyde to glycine betaine at the same rate. The protein is Oxygen-dependent choline dehydrogenase of Escherichia coli O45:K1 (strain S88 / ExPEC).